Here is a 753-residue protein sequence, read N- to C-terminus: Replication restart protein PriA (753 aa).

Residues serine 228–leucine 395 enclose the Helicase ATP-binding domain. Glycine 241–threonine 248 is an ATP binding site. The short motif at aspartate 337–histidine 340 is the DEAH box element. Positions 458, 461, 467, 470, 485, 488, 499, and 502 each coordinate Zn(2+). A Helicase C-terminal domain is found at arginine 491 to isoleucine 646.

Belongs to the helicase family. PriA subfamily. As to quaternary structure, component of the replication restart primosome. The cofactor is Zn(2+).

The enzyme catalyses Couples ATP hydrolysis with the unwinding of duplex DNA by translocating in the 3'-5' direction.. It carries out the reaction ATP + H2O = ADP + phosphate + H(+). Functionally, initiates the restart of stalled replication forks, which reloads the replicative helicase on sites other than the origin of replication. Recognizes and binds to abandoned replication forks and remodels them to uncover a helicase loading site. Promotes assembly of the primosome at these replication forks. This is Replication restart protein PriA from Chlamydia trachomatis serovar D (strain ATCC VR-885 / DSM 19411 / UW-3/Cx).